A 145-amino-acid chain; its full sequence is Superoxide dismutase [Mn/Fe] (145 aa).

Fe(3+)-binding residues include His-10 and His-64. Residues His-10 and His-64 each contribute to the Mn(2+) site. Residues 126–145 (TSTANQDTPISEGKKPILGL) form a disordered region.

It belongs to the iron/manganese superoxide dismutase family. It depends on Mn(2+) as a cofactor. Fe(3+) serves as cofactor.

The catalysed reaction is 2 superoxide + 2 H(+) = H2O2 + O2. Its function is as follows. Destroys superoxide anion radicals which are normally produced within the cells and which are toxic to biological systems. Catalyzes the dismutation of superoxide anion radicals into O2 and H2O2 by successive reduction and oxidation of the transition metal ion at the active site. In Streptococcus oralis, this protein is Superoxide dismutase [Mn/Fe] (sodA).